The sequence spans 399 residues: Tryptophan synthase beta chain (399 aa).

Lysine 92 is subject to N6-(pyridoxal phosphate)lysine.

It belongs to the TrpB family. In terms of assembly, tetramer of two alpha and two beta chains. Requires pyridoxal 5'-phosphate as cofactor.

The enzyme catalyses (1S,2R)-1-C-(indol-3-yl)glycerol 3-phosphate + L-serine = D-glyceraldehyde 3-phosphate + L-tryptophan + H2O. It participates in amino-acid biosynthesis; L-tryptophan biosynthesis; L-tryptophan from chorismate: step 5/5. In terms of biological role, the beta subunit is responsible for the synthesis of L-tryptophan from indole and L-serine. The polypeptide is Tryptophan synthase beta chain (Legionella pneumophila (strain Corby)).